A 737-amino-acid chain; its full sequence is Protein penguin (737 aa).

Residues 1-128 (MVSSEPKGPA…EKKDLKLKRK (128 aa)) are disordered. 2 stretches are compositionally biased toward basic and acidic residues: residues 76–89 (KKFD…DKRL) and 107–122 (EGEK…EKKD). The PUM-HD domain occupies 139 to 490 (EANQIHEKLR…EILEQIEAPI (352 aa)). Pumilio repeat units follow at residues 167–202 (NVGD…EISE), 203–238 (KLLP…KLVD), 239–274 (SLYG…YMRQ), 388–425 (NIKE…AIYD), and 426–462 (HLHG…EFIR). Positions 577 to 638 (VESSSDDEDE…EEEPAAPLVS (62 aa)) are disordered. The span at 580–600 (SSDDEDEDEDEDEESDDEGDE) shows a compositional bias: acidic residues. A compositionally biased stretch (basic and acidic residues) spans 601-615 (KEQKEAAADDAEPKV). The segment covering 616-626 (KKAKKEPKKPK) has biased composition (basic residues).

This Drosophila melanogaster (Fruit fly) protein is Protein penguin.